The primary structure comprises 518 residues: D-aminopeptidase (518 aa).

The active-site Nucleophile is Ser62. Lys65 (proton donor/acceptor) is an active-site residue. The tract at residues 477-487 (QRSMDAPSPGE) is important for specificity. Asp481 contributes to the substrate binding site.

This sequence belongs to the peptidase S12 family. In terms of assembly, homodimer.

The enzyme catalyses Release of an N-terminal D-amino acid from a peptide, Xaa-|-Yaa-, in which Xaa is preferably D-Ala, D-Ser or D-Thr. D-amino acid amides and methyl esters also are hydrolyzed, as is glycine amide.. Inhibited by beta-lactam compounds such as 6-aminopenicillic acid, 7-aminocephalosporanic acid, benzylpenicillin and ampicillin. Inhibited by p-chloromercuribenzoate. Its function is as follows. Hydrolyzes N-terminal residues in D-amino acid-containing peptides. This is D-aminopeptidase from Brucella abortus (strain S19).